The following is a 619-amino-acid chain: Dihydroxy-acid dehydratase (619 aa).

Asp-81 provides a ligand contact to Mg(2+). Cys-122 is a [2Fe-2S] cluster binding site. Mg(2+) contacts are provided by Asp-123 and Lys-124. Lys-124 is modified (N6-carboxylysine). Cys-201 serves as a coordination point for [2Fe-2S] cluster. Glu-496 is a binding site for Mg(2+). Catalysis depends on Ser-522, which acts as the Proton acceptor.

It belongs to the IlvD/Edd family. In terms of assembly, homodimer. Requires [2Fe-2S] cluster as cofactor. It depends on Mg(2+) as a cofactor.

The enzyme catalyses (2R)-2,3-dihydroxy-3-methylbutanoate = 3-methyl-2-oxobutanoate + H2O. It catalyses the reaction (2R,3R)-2,3-dihydroxy-3-methylpentanoate = (S)-3-methyl-2-oxopentanoate + H2O. Its pathway is amino-acid biosynthesis; L-isoleucine biosynthesis; L-isoleucine from 2-oxobutanoate: step 3/4. It participates in amino-acid biosynthesis; L-valine biosynthesis; L-valine from pyruvate: step 3/4. In terms of biological role, functions in the biosynthesis of branched-chain amino acids. Catalyzes the dehydration of (2R,3R)-2,3-dihydroxy-3-methylpentanoate (2,3-dihydroxy-3-methylvalerate) into 2-oxo-3-methylpentanoate (2-oxo-3-methylvalerate) and of (2R)-2,3-dihydroxy-3-methylbutanoate (2,3-dihydroxyisovalerate) into 2-oxo-3-methylbutanoate (2-oxoisovalerate), the penultimate precursor to L-isoleucine and L-valine, respectively. This Paracidovorax citrulli (strain AAC00-1) (Acidovorax citrulli) protein is Dihydroxy-acid dehydratase.